We begin with the raw amino-acid sequence, 64 residues long: Prokaryotic ubiquitin-like protein Pup (64 aa).

Residues 1–36 (MAQEQTKRGGGGGDDEDVTGTTAAGQERRKKLAQDT) are disordered. Residues 21-58 (TTAAGQERRKKLAQDTDDLLDEIDDVLEENAEDFVRAY) are ARC ATPase binding. Residues 26-52 (QERRKKLAQDTDDLLDEIDDVLEENAE) adopt a coiled-coil conformation. Residue Gln-64 is modified to Deamidated glutamine. Gln-64 participates in a covalent cross-link: Isoglutamyl lysine isopeptide (Gln-Lys) (interchain with K-? in acceptor proteins).

This sequence belongs to the prokaryotic ubiquitin-like protein family. In terms of assembly, strongly interacts with the proteasome-associated ATPase ARC through a hydrophobic interface; the interacting region of Pup lies in its C-terminal half. There is one Pup binding site per ARC hexamer ring. Is modified by deamidation of its C-terminal glutamine to glutamate by the deamidase Dop, a prerequisite to the subsequent pupylation process.

It participates in protein degradation; proteasomal Pup-dependent pathway. Protein modifier that is covalently attached to lysine residues of substrate proteins, thereby targeting them for proteasomal degradation. The tagging system is termed pupylation. This Mycobacterium ulcerans (strain Agy99) protein is Prokaryotic ubiquitin-like protein Pup.